The sequence spans 295 residues: Defective in cullin neddylation protein AAR3 (295 aa).

In terms of domain architecture, DCUN1 spans 1 to 180 (MDSSPVSARF…LIDDFVEHMY (180 aa)). The short motif at 214–221 (YRRPHTGL) is the Nuclear localization signal element. Residues 214–251 (YRRPHTGLRNIPGLKRKTSKKNDEEEEDEDEEVLETQN) form a disordered region. A compositionally biased stretch (acidic residues) spans 237 to 247 (EEEEDEDEEVL).

The protein localises to the nucleus. Functionally, may contribute to the neddylation of all cullins by transferring NEDD8 from N-terminally acetylated NEDD8-conjugating E2s enzyme to different cullin C-terminal domain-RBX complexes; neddylation of cullins play an essential role in the regulation of SCF-type complexes activity. Regulates responses to the synthetic auxin 2,4-dichlorophenoxyacetic acid (2,4-D) in roots, probably by modulating the SCF(TIR1) ubiquitin E3 ligase complex-mediated proteolysis. The sequence is that of Defective in cullin neddylation protein AAR3 from Arabidopsis thaliana (Mouse-ear cress).